We begin with the raw amino-acid sequence, 585 residues long: Archaeosine synthase (585 aa).

The PUA domain occupies 516–584 (TKTVEIDGFV…IGVEIRHVEE (69 aa)).

It belongs to the archaeosine synthase type 1 family. As to quaternary structure, homodimer.

It carries out the reaction 7-cyano-7-carbaguanosine(15) in tRNA + L-glutamine + H2O = archaeosine(15) in tRNA + L-glutamate. It functions in the pathway tRNA modification; archaeosine-tRNA biosynthesis. Functionally, is responsible for the final step in the biosynthesis of archaeosine, a modified nucleoside present in the dihydrouridine loop (D-loop) of archaeal tRNA. Catalyzes the conversion of 7-cyano-7-deazaguanine (preQ0)-modified tRNA to archaeosine-tRNA, transforming a nitrile group to a formamidine group. The sequence is that of Archaeosine synthase from Haloferax volcanii (strain ATCC 29605 / DSM 3757 / JCM 8879 / NBRC 14742 / NCIMB 2012 / VKM B-1768 / DS2) (Halobacterium volcanii).